The sequence spans 625 residues: Interleukin-1 receptor-associated kinase-like 2 (625 aa).

The 82-residue stretch at 13-94 (LDDLCRNMDA…RAAQIILNWK (82 aa)) folds into the Death domain. Residues 111-181 (KPEKPLAASV…SSDSKDFSTS (71 aa)) are disordered. Ser-144 carries the phosphoserine modification. The span at 169–181 (LPTSSDSKDFSTS) shows a compositional bias: polar residues. The Protein kinase domain occupies 210 to 489 (FNQNRKISQG…LCLRRRNTSL (280 aa)). ATP contacts are provided by residues 216–224 (ISQGTFADV), Lys-237, and 337–340 (KSSN). The interval 510 to 540 (LPWSGLSEGTGSSSNTPEETDDVDNSSLDAS) is disordered. Over residues 516–526 (SEGTGSSSNTP) the composition is skewed to polar residues.

The protein belongs to the protein kinase superfamily. TKL Ser/Thr protein kinase family. Pelle subfamily. Interacts with MYD88. IL-1 stimulation leads to the formation of a signaling complex which dissociates from the IL-1 receptor following the binding of PELI1. As to expression, expressed in spleen, thymus, prostate, lung, liver, skeletal muscle, kidney, pancreas and peripheral blood leukocytes.

Its function is as follows. Binds to the IL-1 type I receptor following IL-1 engagement, triggering intracellular signaling cascades leading to transcriptional up-regulation and mRNA stabilization. The sequence is that of Interleukin-1 receptor-associated kinase-like 2 (IRAK2) from Homo sapiens (Human).